We begin with the raw amino-acid sequence, 496 residues long: MATSDSNMLLNYVPVYVMLPLGVVNVDNVFEDPDGLKEQLLQLRAAGVDGVMVDVWWGIIELKGPKQYDWRAYRSLFQLVQECGLTLQAIMSFHQCGGNVGDIVNIPIPQWVLDIGESNHDIFYTNRSGTRNKEYLTVGVDNEPIFHGRTAIEIYSDYMKSFRENMSDFLESGLIIDIEVGLGPAGELRYPSYPQSQGWEFPRIGEFQCYDKYLKADFKAAVARAGHPEWELPDDAGKYNDVPESTGFFKSNGTYVTEKGKFFLTWYSNKLLNHGDQILDEANKAFLGCKVKLAIKVSGIHWWYKVENHAAELTAGYYNLNDRDGYRPIARMLSRHHAILNFTCLEMRDSEQPSDAKSGPQELVQQVLSGGWREDIRVAGENALPRYDATAYNQIILNAKPQGVNNNGPPKLSMFGVTYLRLSDDLLQKSNFNIFKKFVLKMHADQDYCANPQKYNHAITPLKPSAPKIPIEVLLEATKPTLPFPWLPETDMKVDG.

Ala-2 is modified (N-acetylalanine). Substrate-binding residues include Asp-54, His-94, and Asp-102. The active-site Proton donor is Glu-187. Positions 296, 301, and 343 each coordinate substrate. Glu-381 acts as the Proton acceptor in catalysis. Residues 382–383 (NA) and Arg-421 contribute to the substrate site.

The protein belongs to the glycosyl hydrolase 14 family. Monomer.

It catalyses the reaction Hydrolysis of (1-&gt;4)-alpha-D-glucosidic linkages in polysaccharides so as to remove successive maltose units from the non-reducing ends of the chains.. This Glycine max (Soybean) protein is Beta-amylase (BMY1).